We begin with the raw amino-acid sequence, 282 residues long: Bifunctional protein FolD (282 aa).

NADP(+) is bound by residues 165 to 167 (NRS), Ser190, and Ile231.

Belongs to the tetrahydrofolate dehydrogenase/cyclohydrolase family. In terms of assembly, homodimer.

The enzyme catalyses (6R)-5,10-methylene-5,6,7,8-tetrahydrofolate + NADP(+) = (6R)-5,10-methenyltetrahydrofolate + NADPH. The catalysed reaction is (6R)-5,10-methenyltetrahydrofolate + H2O = (6R)-10-formyltetrahydrofolate + H(+). Its pathway is one-carbon metabolism; tetrahydrofolate interconversion. Functionally, catalyzes the oxidation of 5,10-methylenetetrahydrofolate to 5,10-methenyltetrahydrofolate and then the hydrolysis of 5,10-methenyltetrahydrofolate to 10-formyltetrahydrofolate. The protein is Bifunctional protein FolD of Clostridium botulinum (strain 657 / Type Ba4).